The following is an 801-amino-acid chain: Putative mRNA-capping enzyme P5 (801 aa).

Belongs to the phytoreovirus protein P5 family.

It localises to the virion. The protein localises to the host cytoplasm. The catalysed reaction is a 5'-end diphospho-ribonucleoside in mRNA + GTP + H(+) = a 5'-end (5'-triphosphoguanosine)-ribonucleoside in mRNA + diphosphate. It functions in the pathway mRNA processing; mRNA capping. Functionally, enzyme involved in mRNA capping (Potential). Binds to GTP and might have guanylyltransferase activity. Together with the RNA-directed RNA polymerase P1 and protein P7, forms an transcriptional complex positioned near the channels situated at each of the five-fold vertices of the core. The polypeptide is Putative mRNA-capping enzyme P5 (Alopecurus aequalis (Barnyard grass)).